The following is a 77-amino-acid chain: Subtilisin-chymotrypsin inhibitor CI-1C (77 aa).

Belongs to the protease inhibitor I13 (potato type I serine protease inhibitor) family.

Functionally, inhibits both subtilisin and chymotrypsin. This chain is Subtilisin-chymotrypsin inhibitor CI-1C, found in Hordeum vulgare (Barley).